A 368-amino-acid chain; its full sequence is Probable endopolygalacturonase I (368 aa).

The first 18 residues, 1–18, serve as a signal peptide directing secretion; it reads MHSFQLLGLAALGSLVAA. Positions 19–31 are excised as a propeptide; it reads APSPSRVSDLTER. A disulfide bond links Cys-35 and Cys-50. PbH1 repeat units lie at residues 162–192, 193–214, 215–235, 244–265, 273–295, and 307–328; these read ANNL…DISE, SNGV…AINS, GKNI…SIGS, VQGV…RIKT, VSDV…VIQQ, and SNGI…DSKA. The active-site Proton donor is the Asp-207. The cysteines at positions 209 and 225 are disulfide-linked. His-229 is a catalytic residue. Intrachain disulfides connect Cys-335/Cys-340 and Cys-359/Cys-368.

Belongs to the glycosyl hydrolase 28 family.

Its subcellular location is the secreted. The catalysed reaction is (1,4-alpha-D-galacturonosyl)n+m + H2O = (1,4-alpha-D-galacturonosyl)n + (1,4-alpha-D-galacturonosyl)m.. In terms of biological role, involved in maceration and soft-rotting of plant tissue. Hydrolyzes the 1,4-alpha glycosidic bonds of de-esterified pectate in the smooth region of the plant cell wall. The sequence is that of Probable endopolygalacturonase I (pgaI) from Aspergillus terreus (strain NIH 2624 / FGSC A1156).